The sequence spans 1098 residues: Probable arabinosyltransferase B (1098 aa).

A run of 12 helical transmembrane segments spans residues 28–50, 217–239, 271–293, 402–419, 434–456, 472–494, 541–558, 570–587, 597–619, 626–648, 663–685, and 698–720; these read WVATIAGLIGFVLSVATPLLPVV, LKLLAIIGAIVATVVALIALWRL, ASWRTFTLTDAVVIFGFLLWHVI, LRPEGIIALGSLVTYVLI, AVVTAAFTLGVQPTGLIAVAALV, LVGTLPLVSPMLAAGTVILTVVF, FGFLITALCLFTAVFIML, PAWRLMGVIFGTMFFLMF, GLFAAVGAAMAALTTVLVSPSVL, MAFLAALFFLLALCWATTNGWWY, IDGITVSTIFFALFAIAAGYAAW, and LIRALTTAPVPIVAGFMAAVFVA.

It belongs to the emb family.

The protein localises to the cell membrane. Its function is as follows. Arabinosyl transferase responsible for the polymerization of arabinose into the arabinan of arabinogalactan. The sequence is that of Probable arabinosyltransferase B (embB) from Mycobacterium tuberculosis (strain CDC 1551 / Oshkosh).